Consider the following 182-residue polypeptide: Protein LIGHT-DEPENDENT SHORT HYPOCOTYLS 5 (182 aa).

Low complexity predominate over residues 1-16 (MEGETAAKAAASSSSS). Disordered stretches follow at residues 1–22 (MEGETAAKAAASSSSSPSRYES) and 138–168 (ARGIPYDKKKRKRPHTDTATPIAGDGDDAEG). The region spanning 19-147 (RYESQKRRDW…ARGIPYDKKK (129 aa)) is the ALOG domain. A Nuclear localization signal motif is present at residues 145-149 (KKKRK).

Belongs to the plant homeotic and developmental regulators ALOG protein family.

Its subcellular location is the nucleus. Probable transcription regulator that acts as a developmental regulator by promoting cell growth in response to light. The chain is Protein LIGHT-DEPENDENT SHORT HYPOCOTYLS 5 (LSH5) from Arabidopsis thaliana (Mouse-ear cress).